A 258-amino-acid chain; its full sequence is Ribosomal RNA small subunit methyltransferase J (258 aa).

S-adenosyl-L-methionine contacts are provided by residues 107-108 (RD), 123-124 (ER), and aspartate 177.

It belongs to the methyltransferase superfamily. RsmJ family.

The protein localises to the cytoplasm. It catalyses the reaction guanosine(1516) in 16S rRNA + S-adenosyl-L-methionine = N(2)-methylguanosine(1516) in 16S rRNA + S-adenosyl-L-homocysteine + H(+). In terms of biological role, specifically methylates the guanosine in position 1516 of 16S rRNA. This chain is Ribosomal RNA small subunit methyltransferase J, found in Stutzerimonas stutzeri (strain A1501) (Pseudomonas stutzeri).